We begin with the raw amino-acid sequence, 1036 residues long: Zinc finger protein 532 (1036 aa).

Disordered stretches follow at residues proline 26–glycine 92, glycine 106–serine 206, arginine 220–lysine 265, and alanine 281–isoleucine 362. Basic and acidic residues predominate over residues serine 32 to histidine 52. Phosphoserine is present on residues serine 130, serine 133, and serine 134. Residues glutamate 136–aspartate 151 show a composition bias toward acidic residues. Lysine 175 carries the N6-acetyllysine modification. Over residues glutamate 182–glycine 193 the composition is skewed to polar residues. Composition is skewed to basic and acidic residues over residues histidine 194–glutamate 205 and arginine 220–aspartate 249. Residues alanine 253–lysine 265 are compositionally biased toward low complexity. A compositionally biased stretch (basic and acidic residues) spans glutamate 302 to proline 314. Serine 306 and serine 313 each carry phosphoserine. Residues serine 336–serine 353 are compositionally biased toward low complexity. Serine 433 carries the post-translational modification Phosphoserine. Glycyl lysine isopeptide (Lys-Gly) (interchain with G-Cter in SUMO2) cross-links involve residues lysine 458 and lysine 515. A C2H2-type 1; degenerate zinc finger spans residues tyrosine 615–tyrosine 634. The C2H2-type 2; degenerate zinc-finger motif lies at leucine 751–aspartate 775. The C2H2-type 3 zinc finger occupies histidine 784–histidine 807. A C2H2-type 4; degenerate zinc finger spans residues tyrosine 814–histidine 840. Residues valine 847–lysine 877 form a disordered region. Over residues aspartate 852 to isoleucine 867 the composition is skewed to acidic residues. Residues lysine 868–lysine 877 show a composition bias toward basic and acidic residues. At serine 875 the chain carries Phosphoserine. Residues lysine 879 and lysine 902 each participate in a glycyl lysine isopeptide (Lys-Gly) (interchain with G-Cter in SUMO2) cross-link. C2H2-type zinc fingers lie at residues histidine 938–histidine 961 and arginine 999–histidine 1021. A disordered region spans residues proline 966–lysine 1000.

This sequence belongs to the krueppel C2H2-type zinc-finger protein family.

Its subcellular location is the nucleus. May be involved in transcriptional regulation. The sequence is that of Zinc finger protein 532 (Znf532) from Mus musculus (Mouse).